Consider the following 466-residue polypeptide: Small RNA degrading nuclease 2 (466 aa).

The Exonuclease domain maps to 142–298 (MIAIDCEMVL…HDAEAAMKLV (157 aa)). A disordered region spans residues 426–466 (EENNASSKKRKRENHSKGTRDRRRCKPLSRRKQRSNVKRRR). Positions 445–466 (RDRRRCKPLSRRKQRSNVKRRR) are enriched in basic residues.

The protein belongs to the REXO1/REXO3 family.

It localises to the nucleus. In terms of biological role, 3'-5' exonuclease degrading single-stranded small RNAs. In Arabidopsis thaliana (Mouse-ear cress), this protein is Small RNA degrading nuclease 2 (SDN2).